A 428-amino-acid polypeptide reads, in one-letter code: Aminotransferase verI (428 aa).

Position 254 is an N6-(pyridoxal phosphate)lysine (Lys-254).

It belongs to the class-I pyridoxal-phosphate-dependent aminotransferase family. Pyridoxal 5'-phosphate is required as a cofactor.

It functions in the pathway mycotoxin biosynthesis. Aminotransferase; part of the gene cluster that mediates the biosynthesis of 11'-deoxyverticillin A, one of the dimeric epipolythiodioxopiperazines (ETPs) from the verticillin family that act as mycotoxins. 11'-deoxyverticillin A is required for normal conidiation. The nonribosomal peptide synthetase verP is speculated to be responsible for condensation of amino acids to form the carbon skeleton of verticillin, whereas the cluster-specific tailoring enzymes are involved in further modifications leading to the production of 11'-deoxyverticillin A. The sequence is that of Aminotransferase verI from Clonostachys rogersoniana.